We begin with the raw amino-acid sequence, 490 residues long: ATP synthase subunit alpha 1 (490 aa).

171-178 (GDNGLGKS) lines the ATP pocket.

It belongs to the ATPase alpha/beta chains family. As to quaternary structure, F-type ATPases have 2 components, CF(1) - the catalytic core - and CF(0) - the membrane proton channel. CF(1) has five subunits: alpha(3), beta(3), gamma(1), delta(1), epsilon(1). CF(0) has three main subunits: a(1), b(2) and c(9-12). The alpha and beta chains form an alternating ring which encloses part of the gamma chain. CF(1) is attached to CF(0) by a central stalk formed by the gamma and epsilon chains, while a peripheral stalk is formed by the delta and b chains.

It is found in the cell inner membrane. It carries out the reaction ATP + H2O + 4 H(+)(in) = ADP + phosphate + 5 H(+)(out). Functionally, produces ATP from ADP in the presence of a proton gradient across the membrane. The alpha chain is a regulatory subunit. This Legionella pneumophila (strain Corby) protein is ATP synthase subunit alpha 1.